We begin with the raw amino-acid sequence, 350 residues long: Uroporphyrinogen decarboxylase (350 aa).

Residues 28 to 32 (RQAGR), D78, Y155, S210, and H325 each bind substrate.

It belongs to the uroporphyrinogen decarboxylase family. In terms of assembly, homodimer.

It is found in the cytoplasm. The enzyme catalyses uroporphyrinogen III + 4 H(+) = coproporphyrinogen III + 4 CO2. Its pathway is porphyrin-containing compound metabolism; protoporphyrin-IX biosynthesis; coproporphyrinogen-III from 5-aminolevulinate: step 4/4. Functionally, catalyzes the decarboxylation of four acetate groups of uroporphyrinogen-III to yield coproporphyrinogen-III. The chain is Uroporphyrinogen decarboxylase from Trichormus variabilis (strain ATCC 29413 / PCC 7937) (Anabaena variabilis).